We begin with the raw amino-acid sequence, 350 residues long: Uroporphyrinogen decarboxylase (350 aa).

Residues 28 to 32 (RQAGR), aspartate 78, tyrosine 155, serine 210, and histidine 325 each bind substrate.

This sequence belongs to the uroporphyrinogen decarboxylase family. Homodimer.

The protein localises to the cytoplasm. It catalyses the reaction uroporphyrinogen III + 4 H(+) = coproporphyrinogen III + 4 CO2. The protein operates within porphyrin-containing compound metabolism; protoporphyrin-IX biosynthesis; coproporphyrinogen-III from 5-aminolevulinate: step 4/4. Catalyzes the decarboxylation of four acetate groups of uroporphyrinogen-III to yield coproporphyrinogen-III. The polypeptide is Uroporphyrinogen decarboxylase (Picosynechococcus sp. (strain ATCC 27264 / PCC 7002 / PR-6) (Agmenellum quadruplicatum)).